Reading from the N-terminus, the 167-residue chain is Small ribosomal subunit protein uS5 (167 aa).

An S5 DRBM domain is found at 12 to 75 (LQEKLIAVNR…EKARRNMVTI (64 aa)).

It belongs to the universal ribosomal protein uS5 family. Part of the 30S ribosomal subunit. Contacts proteins S4 and S8.

In terms of biological role, with S4 and S12 plays an important role in translational accuracy. Located at the back of the 30S subunit body where it stabilizes the conformation of the head with respect to the body. The sequence is that of Small ribosomal subunit protein uS5 from Vibrio vulnificus (strain CMCP6).